We begin with the raw amino-acid sequence, 564 residues long: Dicarboxylate transporter 2, chloroplastic (564 aa).

A chloroplast-targeting transit peptide spans 1–22 (MESLALLPTLSLSTTTTTSKAT). The segment at 35–58 (RRPHLSLSLSSTPKPTLTFSSHSH) is disordered. Residues 39-58 (LSLSLSSTPKPTLTFSSHSH) show a composition bias toward low complexity. The next 12 membrane-spanning stretches (helical) occupy residues 94–114 (GAKL…RFAV), 127–147 (LLAI…PVGA), 166–186 (TAFC…FFFA), 235–255 (AGGI…SLPG), 262–282 (LGTY…ALFL), 307–327 (VFWL…TPLI), 356–376 (VTKN…LWVF), 380–400 (IGVS…LLGV), 415–435 (TLAW…LGIV), 451–471 (LSWP…HYLF), 484–504 (AFLA…LALA), and 538–558 (MGFI…GVWW).

Belongs to the SLC13A/DASS transporter (TC 2.A.47) family. DIT1 subfamily. Expressed in leaves.

It localises to the plastid. It is found in the chloroplast inner membrane. Its function is as follows. Glutamate/malate translocator involved with DIT1 in primary ammonia assimilation and in the re-assimilation of ammonia generated by the photorespiratory pathway. Exports the end product of ammonia assimilation, glutamate, from plastids to the cytosol. The precursor for ammonia assimilation, 2-oxoglutarate, is imported from the cytosol by DIT1. In Spinacia oleracea (Spinach), this protein is Dicarboxylate transporter 2, chloroplastic (DIT2).